We begin with the raw amino-acid sequence, 444 residues long: Histidinol dehydrogenase (444 aa).

NAD(+) contacts are provided by tyrosine 135, glutamine 199, and asparagine 227. Substrate-binding residues include threonine 250, glutamine 272, and histidine 275. Glutamine 272 and histidine 275 together coordinate Zn(2+). Catalysis depends on proton acceptor residues glutamate 341 and histidine 342. Substrate contacts are provided by histidine 342, aspartate 375, glutamate 429, and histidine 434. Aspartate 375 contacts Zn(2+). Residue histidine 434 coordinates Zn(2+).

Belongs to the histidinol dehydrogenase family. Requires Zn(2+) as cofactor.

It carries out the reaction L-histidinol + 2 NAD(+) + H2O = L-histidine + 2 NADH + 3 H(+). It participates in amino-acid biosynthesis; L-histidine biosynthesis; L-histidine from 5-phospho-alpha-D-ribose 1-diphosphate: step 9/9. In terms of biological role, catalyzes the sequential NAD-dependent oxidations of L-histidinol to L-histidinaldehyde and then to L-histidine. The chain is Histidinol dehydrogenase (hisD) from Mycobacterium bovis (strain ATCC BAA-935 / AF2122/97).